The following is a 61-amino-acid chain: U-poneritoxin(01)-Om5b (61 aa).

Residues 1–23 form the signal peptide; sequence MKLSALSLAFAIILMMTIMYTKA. The propeptide occupies 24–41; the sequence is DADASADAEADADAEAEA. Gln-59 bears the Glutamine amide mark.

It belongs to the formicidae venom precursor-01 superfamily. Truncated sequences of this peptide have also been found in the venom. It is possible they have been cleaved in the venom. Expressed by the venom gland.

It is found in the secreted. Its function is as follows. Acidic peptide with potent hemolytic activities. It also shows low antimicrobial activities against E.coli (MIC=50uM), as well as histamine-releasing activity (28.3% at 10 uM). Does not have activity against S.aureus, and S.cerevisiae. This Odontomachus monticola (Trap-jaw ant) protein is U-poneritoxin(01)-Om5b.